The following is a 1190-amino-acid chain: Isoleucine--tRNA ligase, cytoplasmic (1190 aa).

The 'HIGH' region motif lies at 49–59; that stretch reads PFATGLPHYGH. Residues 271-299 are disordered; that stretch reads DKPKAKLSNGPAGDTKKANPKAKGAKPES. Residues 632–636 carry the 'KMSKS' region motif; it reads KMAKK. Lys635 provides a ligand contact to ATP.

The protein belongs to the class-I aminoacyl-tRNA synthetase family.

The protein resides in the cytoplasm. It is found in the cytosol. The enzyme catalyses tRNA(Ile) + L-isoleucine + ATP = L-isoleucyl-tRNA(Ile) + AMP + diphosphate. In Arabidopsis thaliana (Mouse-ear cress), this protein is Isoleucine--tRNA ligase, cytoplasmic.